Reading from the N-terminus, the 159-residue chain is 3-dehydroquinate dehydratase (159 aa).

Tyr-22 serves as the catalytic Proton acceptor. Substrate-binding residues include Asn-73, His-79, and Asp-86. Catalysis depends on His-99, which acts as the Proton donor. Substrate-binding positions include 100 to 101 and Arg-110; that span reads IS.

The protein belongs to the type-II 3-dehydroquinase family. In terms of assembly, homododecamer.

The enzyme catalyses 3-dehydroquinate = 3-dehydroshikimate + H2O. It participates in metabolic intermediate biosynthesis; chorismate biosynthesis; chorismate from D-erythrose 4-phosphate and phosphoenolpyruvate: step 3/7. Functionally, catalyzes a trans-dehydration via an enolate intermediate. This Campylobacter jejuni subsp. doylei (strain ATCC BAA-1458 / RM4099 / 269.97) protein is 3-dehydroquinate dehydratase.